A 452-amino-acid chain; its full sequence is Protein phosphatase 1F (452 aa).

Residues 153–410 form the PPM-type phosphatase domain; sequence LVSIHAIRNT…DNITVMVVFL (258 aa). 4 residues coordinate Mn(2+): aspartate 195, glycine 196, aspartate 357, and aspartate 401. Serine 452 bears the Phosphoserine mark.

This sequence belongs to the PP2C family. In terms of assembly, associates with FEM1B. Mg(2+) serves as cofactor. Requires Mn(2+) as cofactor. As to expression, expressed in the liver.

It catalyses the reaction O-phospho-L-seryl-[protein] + H2O = L-seryl-[protein] + phosphate. The enzyme catalyses O-phospho-L-threonyl-[protein] + H2O = L-threonyl-[protein] + phosphate. Dephosphorylates and concomitantly deactivates CaM-kinase II activated upon autophosphorylation, and CaM-kinases IV and I activated upon phosphorylation by CaM-kinase kinase. Promotes apoptosis. The protein is Protein phosphatase 1F (Ppm1f) of Mus musculus (Mouse).